We begin with the raw amino-acid sequence, 166 residues long: Large ribosomal subunit protein uL10 (166 aa).

It belongs to the universal ribosomal protein uL10 family. As to quaternary structure, part of the ribosomal stalk of the 50S ribosomal subunit. The N-terminus interacts with L11 and the large rRNA to form the base of the stalk. The C-terminus forms an elongated spine to which L12 dimers bind in a sequential fashion forming a multimeric L10(L12)X complex.

In terms of biological role, forms part of the ribosomal stalk, playing a central role in the interaction of the ribosome with GTP-bound translation factors. In Alkaliphilus metalliredigens (strain QYMF), this protein is Large ribosomal subunit protein uL10.